Consider the following 295-residue polypeptide: Small ribosomal subunit biogenesis GTPase RsgA (295 aa).

The CP-type G domain occupies 68-228; that stretch reads KNLLTKPHVA…VVDTPGFANL (161 aa). GTP is bound by residues 117–120 and 170–178; these read NKMD and GLSGVGKSS. Residues Cys250, Cys255, His257, and Cys263 each coordinate Zn(2+).

The protein belongs to the TRAFAC class YlqF/YawG GTPase family. RsgA subfamily. As to quaternary structure, monomer. Associates with 30S ribosomal subunit, binds 16S rRNA. Zn(2+) serves as cofactor.

The protein resides in the cytoplasm. In terms of biological role, one of several proteins that assist in the late maturation steps of the functional core of the 30S ribosomal subunit. Helps release RbfA from mature subunits. May play a role in the assembly of ribosomal proteins into the subunit. Circularly permuted GTPase that catalyzes slow GTP hydrolysis, GTPase activity is stimulated by the 30S ribosomal subunit. The chain is Small ribosomal subunit biogenesis GTPase RsgA from Thermotoga petrophila (strain ATCC BAA-488 / DSM 13995 / JCM 10881 / RKU-1).